The sequence spans 201 residues: Recombination protein RecR (201 aa).

The C4-type zinc-finger motif lies at 57–72 (CADCRTFTEQEICTIC). The Toprim domain occupies 81 to 176 (GLICVVESPA…DASRIAHGVP (96 aa)).

The protein belongs to the RecR family.

Functionally, may play a role in DNA repair. It seems to be involved in an RecBC-independent recombinational process of DNA repair. It may act with RecF and RecO. This is Recombination protein RecR from Erwinia tasmaniensis (strain DSM 17950 / CFBP 7177 / CIP 109463 / NCPPB 4357 / Et1/99).